Reading from the N-terminus, the 432-residue chain is Glutamate-1-semialdehyde 2,1-aminomutase (432 aa).

Lys265 carries the N6-(pyridoxal phosphate)lysine modification.

Belongs to the class-III pyridoxal-phosphate-dependent aminotransferase family. HemL subfamily. Homodimer. The cofactor is pyridoxal 5'-phosphate.

Its subcellular location is the cytoplasm. The catalysed reaction is (S)-4-amino-5-oxopentanoate = 5-aminolevulinate. The protein operates within porphyrin-containing compound metabolism; protoporphyrin-IX biosynthesis; 5-aminolevulinate from L-glutamyl-tRNA(Glu): step 2/2. The sequence is that of Glutamate-1-semialdehyde 2,1-aminomutase from Photobacterium profundum (strain SS9).